We begin with the raw amino-acid sequence, 161 residues long: MFSFSINTGSKKTLYSDLLTTLKELLSEEGDPIANMANTAALIWTYMPDLNWVGFYRAIRSYLILGPFQGKVACVKIPYGRGVCGTAAATGRIQCVRDVHTYPNHISCDPSAASELVIPIRGRQNQILAVIDLESPTMGRFDAEDVEGCSRLMEVLGRFLG.

The protein belongs to the free Met sulfoxide reductase family.

This Zymomonas mobilis subsp. mobilis (strain ATCC 31821 / ZM4 / CP4) protein is Protein ZMO0507.